Consider the following 128-residue polypeptide: Capsid protein (128 aa).

RNA contacts are provided by arginine 40, arginine 46, alanine 53, arginine 55, lysine 59, aspartate 61, valine 84, serine 86, and threonine 90.

The protein belongs to the Leviviricetes capsid protein family. Homodimer. The dimers in the capsid are covalently linked with disulfide bridges. The homodimers binds to the viral RNA via an operator hairpin, but also to many other RNA sequences in the viral genome; this interaction probably shifts the virus from the replicative to the assembly phase and ensures specific encapsidation of the viral genome.

The protein resides in the virion. Its function is as follows. Capsid protein self-assembles to form an icosahedral capsid with a T=3 symmetry, about 26 nm in diameter, and consisting of 89 capsid proteins dimers (178 capsid proteins). Involved in viral genome encapsidation through the interaction between a capsid protein dimer and the multiple packaging signals present in the RNA genome. Functionally, acts as a translational repressor of viral replicase synthesis late in infection. This latter function is the result of capsid protein interaction with an RNA hairpin which contains the replicase ribosome-binding site. The sequence is that of Capsid protein from Pseudomonas aeruginosa (Bacteriophage PP7).